A 314-amino-acid chain; its full sequence is Olfactory receptor 1E5 (314 aa).

The Extracellular segment spans residues 1–25 (MMGQNQTSISDFLLLGLPIQPEQQN). A glycan (N-linked (GlcNAc...) asparagine) is linked at Asn-5. Residues 26 to 49 (LCYALFLAMYLTTLLGNLLIIVLI) traverse the membrane as a helical segment. Topologically, residues 50–57 (RLDSHLHT) are cytoplasmic. The chain crosses the membrane as a helical span at residues 58-79 (PMYLFLSNLSFSDLCFSSVTIP). The Extracellular segment spans residues 80–100 (KLLQNMQNQDPSIPYADCLTQ). Cysteines 97 and 189 form a disulfide. A helical membrane pass occupies residues 101-120 (MYFFLLFGDLESFLLVAMAY). Residues 121–139 (DRYVAICFPLHYTAIMSPM) lie on the Cytoplasmic side of the membrane. A helical membrane pass occupies residues 140 to 158 (LCLSLVALSWVLTTFHAML). Over 159 to 196 (HTLLMARLCFCADNVIPHFFCDMSALLKLACSDTRVNE) the chain is Extracellular. Residues 197–219 (WVIFIMGGLIVVIPFLLILGSYA) form a helical membrane-spanning segment. Over 220–236 (RIVSSILKVPSSKGICK) the chain is Cytoplasmic. The helical transmembrane segment at 237-260 (AFSTCGSHLSVVSLFYGTIIGLYL) threads the bilayer. At 261-272 (CPSANSSTLKET) the chain is on the extracellular side. Asn-265 carries an N-linked (GlcNAc...) asparagine glycan. Residues 273 to 292 (VMAMMYTVVTPMLNPFIYSL) traverse the membrane as a helical segment. Residues 293-314 (RNRDMKGALERVIXKRKNPFLL) lie on the Cytoplasmic side of the membrane.

It belongs to the G-protein coupled receptor 1 family.

Its subcellular location is the cell membrane. Its function is as follows. Odorant receptor. This is Olfactory receptor 1E5 (OR1E5) from Pan troglodytes (Chimpanzee).